We begin with the raw amino-acid sequence, 88 residues long: Small ribosomal subunit protein uS15c (88 aa).

The protein belongs to the universal ribosomal protein uS15 family. Part of the 30S ribosomal subunit.

It localises to the plastid. Its subcellular location is the chloroplast. In Nasturtium officinale (Watercress), this protein is Small ribosomal subunit protein uS15c (rps15).